The chain runs to 246 residues: NAD(P)H-quinone oxidoreductase subunit K (246 aa).

Residues C62, C63, C127, and C158 each coordinate [4Fe-4S] cluster.

Belongs to the complex I 20 kDa subunit family. In terms of assembly, NDH-1 can be composed of about 15 different subunits; different subcomplexes with different compositions have been identified which probably have different functions. It depends on [4Fe-4S] cluster as a cofactor.

It localises to the cellular thylakoid membrane. The enzyme catalyses a plastoquinone + NADH + (n+1) H(+)(in) = a plastoquinol + NAD(+) + n H(+)(out). It carries out the reaction a plastoquinone + NADPH + (n+1) H(+)(in) = a plastoquinol + NADP(+) + n H(+)(out). Functionally, NDH-1 shuttles electrons from an unknown electron donor, via FMN and iron-sulfur (Fe-S) centers, to quinones in the respiratory and/or the photosynthetic chain. The immediate electron acceptor for the enzyme in this species is believed to be plastoquinone. Couples the redox reaction to proton translocation, and thus conserves the redox energy in a proton gradient. Cyanobacterial NDH-1 also plays a role in inorganic carbon-concentration. The polypeptide is NAD(P)H-quinone oxidoreductase subunit K (Parasynechococcus marenigrum (strain WH8102)).